The chain runs to 111 residues: Probable 4-amino-4-deoxy-L-arabinose-phosphoundecaprenol flippase subunit ArnE (111 aa).

A run of 3 helical transmembrane segments spans residues 38-58, 61-81, and 91-111; these read LWLG…LLVL, LPVG…TLAA, and PRHW…GSAA. The EamA domain occupies 40 to 109; that stretch reads LGLALICMGA…IISGIIILGS (70 aa).

It belongs to the ArnE family. As to quaternary structure, heterodimer of ArnE and ArnF.

Its subcellular location is the cell inner membrane. It participates in bacterial outer membrane biogenesis; lipopolysaccharide biosynthesis. Translocates 4-amino-4-deoxy-L-arabinose-phosphoundecaprenol (alpha-L-Ara4N-phosphoundecaprenol) from the cytoplasmic to the periplasmic side of the inner membrane. The sequence is that of Probable 4-amino-4-deoxy-L-arabinose-phosphoundecaprenol flippase subunit ArnE from Salmonella newport (strain SL254).